An 80-amino-acid polypeptide reads, in one-letter code: Exodeoxyribonuclease 7 small subunit (80 aa).

This sequence belongs to the XseB family. In terms of assembly, heterooligomer composed of large and small subunits.

It is found in the cytoplasm. The enzyme catalyses Exonucleolytic cleavage in either 5'- to 3'- or 3'- to 5'-direction to yield nucleoside 5'-phosphates.. Functionally, bidirectionally degrades single-stranded DNA into large acid-insoluble oligonucleotides, which are then degraded further into small acid-soluble oligonucleotides. The chain is Exodeoxyribonuclease 7 small subunit from Vibrio cholerae serotype O1 (strain ATCC 39541 / Classical Ogawa 395 / O395).